The primary structure comprises 156 residues: Putative pre-16S rRNA nuclease (156 aa).

Belongs to the YqgF nuclease family.

Its subcellular location is the cytoplasm. Its function is as follows. Could be a nuclease involved in processing of the 5'-end of pre-16S rRNA. This chain is Putative pre-16S rRNA nuclease, found in Phenylobacterium zucineum (strain HLK1).